A 714-amino-acid polypeptide reads, in one-letter code: Fatty acid oxidation complex subunit alpha (714 aa).

An enoyl-CoA hydratase region spans residues 1-190 (MEMASVFTLN…KLGLVDDVVP (190 aa)). Residues 306-714 (APLNSVGILG…FWKTTATDLQ (409 aa)) form a 3-hydroxyacyl-CoA dehydrogenase region.

This sequence in the N-terminal section; belongs to the enoyl-CoA hydratase/isomerase family. The protein in the central section; belongs to the 3-hydroxyacyl-CoA dehydrogenase family. Heterotetramer of two alpha chains (FadJ) and two beta chains (FadI).

The protein resides in the cytoplasm. The enzyme catalyses a (3S)-3-hydroxyacyl-CoA = a (2E)-enoyl-CoA + H2O. It catalyses the reaction a 4-saturated-(3S)-3-hydroxyacyl-CoA = a (3E)-enoyl-CoA + H2O. The catalysed reaction is a (3S)-3-hydroxyacyl-CoA + NAD(+) = a 3-oxoacyl-CoA + NADH + H(+). It carries out the reaction (3S)-3-hydroxybutanoyl-CoA = (3R)-3-hydroxybutanoyl-CoA. The protein operates within lipid metabolism; fatty acid beta-oxidation. Functionally, catalyzes the formation of a hydroxyacyl-CoA by addition of water on enoyl-CoA. Also exhibits 3-hydroxyacyl-CoA epimerase and 3-hydroxyacyl-CoA dehydrogenase activities. This Escherichia coli (strain SE11) protein is Fatty acid oxidation complex subunit alpha.